The sequence spans 206 residues: Bacterial microcompartment protein trimer-3 (206 aa).

BMC circularly permuted domains are found at residues 2-104 (ELRA…RLAP) and 105-206 (RVVS…DNRG). The short motif at 67–68 (ER) is the Pore gating residues element.

This sequence belongs to the EutL/PduB family. As to quaternary structure, homotrimerizes to form a pseudohexamer. These stack, with the concave faces together, with the concave faces together, in purified bacterial microcompartments (BMC).

The protein resides in the bacterial microcompartment. In terms of biological role, a minor component of the bacterial microcompartment (BMC) shell. Expression of 5 proteins in E.coli (BMC-H (Hoch_5815), BMC-P (Hoch_5814), and 3 BMC-T (Hoch_5812, Hoch_5816, Hoch_3341)) forms 40 nm artificial BMCs with a molecular mass of 6.5 MDa. One of 2 stacked pseudohexamers in the BMC. There are 20 BMC-T pseudohexamers per BMC, composed of mixed BMC-T1, BMC-T2 and BMC-T3. The shell facets are 20-30 Angstroms thick, with 1 of the stacked BMC-T trimers protruding to the exterior. The stacked trimers may serve as conduits to allow metabolite flux across the protein shell, gated by Arg-68 which contacts Glu-67 in an adjacent subunit; they are flexible enough to play a role in accommodating variations in shell assembly. In Haliangium ochraceum (strain DSM 14365 / JCM 11303 / SMP-2), this protein is Bacterial microcompartment protein trimer-3.